Here is a 187-residue protein sequence, read N- to C-terminus: CRISPR system Cmr subunit Cmr1-2 (187 aa).

The protein belongs to the CRISPR system Cmr1 family. Part of the type III-B Cmr ribonucleoprotein (RNP) complex. This is an elongated RNP with Cmr2 and Cmr3 as the base, with Cmr4 and Cmr5 forming a helical core along the mature crRNA (39 or 45 nt in length), while the complex is capped by Cmr6 and Cmr1. The 5' end of the crRNA is bound to Cmr2 and Cmr3, while Cmr6 and a Cmr1 subunit (Cmr1-1 or Cmr1-2) cap the 3' end of the crRNA. The target RNA lies antiparallel to the crRNA, with its 5' end near Cmr1 and Cmr6 and its 3' end near Cmr2 and Cmr3; major target cleavage occurs nears the junction of Cmr1/Cmr6 and Cmr4/Cmr, with minor cleavage occurring at 6 nt intervals which coincide with the proposed spacing of Cmr4 subunits.

It is found in the cytoplasm. In terms of biological role, CRISPR (clustered regularly interspaced short palindromic repeat), is an adaptive immune system that provides protection against mobile genetic elements (viruses, transposable elements and conjugative plasmids). CRISPR clusters contain sequences complementary to antecedent mobile elements and target invading nucleic acids. CRISPR clusters are transcribed and processed into CRISPR RNA (crRNA), formerly called psiRNA (prokaryotic silencing) in this organism. Part of the Cmr ribonucleoprotein complex which has divalent cation-dependent endoribonuclease activity specific for ssRNA complementary to the crRNA (target RNA), generating 5' hydroxy- and 3' phosphate or 2'-3' cyclic phosphate termini. Cmr4 is probably the subunit that cleaves target RNA. Cmr complex does not cleave ssDNA complementary to the crRNA. Cleavage of invading RNA is guided by the crRNA; substrate cleavage occurs a fixed distance (14 nt) from the 3' end of the crRNA. In vitro reconstitution shows Cmr1-2 and Cmr5 are not absolutely necessary for target cleavage. The sequence is that of CRISPR system Cmr subunit Cmr1-2 from Pyrococcus furiosus (strain ATCC 43587 / DSM 3638 / JCM 8422 / Vc1).